Here is a 160-residue protein sequence, read N- to C-terminus: SsrA-binding protein (160 aa).

Residues 131–160 (KKEYDKRHTERERDSDRELQRAVRTKGKDD) form a disordered region.

This sequence belongs to the SmpB family.

It localises to the cytoplasm. Its function is as follows. Required for rescue of stalled ribosomes mediated by trans-translation. Binds to transfer-messenger RNA (tmRNA), required for stable association of tmRNA with ribosomes. tmRNA and SmpB together mimic tRNA shape, replacing the anticodon stem-loop with SmpB. tmRNA is encoded by the ssrA gene; the 2 termini fold to resemble tRNA(Ala) and it encodes a 'tag peptide', a short internal open reading frame. During trans-translation Ala-aminoacylated tmRNA acts like a tRNA, entering the A-site of stalled ribosomes, displacing the stalled mRNA. The ribosome then switches to translate the ORF on the tmRNA; the nascent peptide is terminated with the 'tag peptide' encoded by the tmRNA and targeted for degradation. The ribosome is freed to recommence translation, which seems to be the essential function of trans-translation. In Pseudomonas syringae pv. tomato (strain ATCC BAA-871 / DC3000), this protein is SsrA-binding protein.